Here is a 169-residue protein sequence, read N- to C-terminus: Proepiregulin (169 aa).

The signal sequence occupies residues 1-29 (MTAGRRMEMLCAGRVPALLLCLGFHLLQA). The propeptide occupies 30–62 (VLSTTVIPSCIPGESSDNCTALVQTEDNPRVAQ). Asn-47 carries an N-linked (GlcNAc...) asparagine glycan. The Extracellular portion of the chain corresponds to 60–119 (VAQVSITKCSSDMNGYCLHGQCIYLVDMSQNYCRCEVGYTGVRCEHFFLTVHQPLSKEYV). In terms of domain architecture, EGF-like spans 64–104 (SITKCSSDMNGYCLHGQCIYLVDMSQNYCRCEVGYTGVRCE). Intrachain disulfides connect Cys-68-Cys-81, Cys-76-Cys-92, and Cys-94-Cys-103. Positions 109–169 (TVHQPLSKEY…TSGDPELPQV (61 aa)) are cleaved as a propeptide — removed in mature form. Residues 120-140 (ALTVILIILFLITVVGSTYYF) traverse the membrane as a helical segment. The Cytoplasmic segment spans residues 141-169 (CRWYRNRKSKEPKKEYERVTSGDPELPQV).

In terms of assembly, interacts with EGFR and ERBB4. In normal adults, expressed predominantly in the placenta and peripheral blood leukocytes. High levels were detected in carcinomas of the bladder, lung, kidney and colon.

The protein localises to the secreted. Its subcellular location is the extracellular space. The protein resides in the cell membrane. Ligand of the EGF receptor/EGFR and ERBB4. Stimulates EGFR and ERBB4 tyrosine phosphorylation. Contributes to inflammation, wound healing, tissue repair, and oocyte maturation by regulating angiogenesis and vascular remodeling and by stimulating cell proliferation. The polypeptide is Proepiregulin (EREG) (Homo sapiens (Human)).